The chain runs to 1488 residues: DNA polymerase alpha catalytic subunit (1488 aa).

3 disordered regions span residues 1 to 22, 79 to 124, and 236 to 325; these read MSES…GRFA, LRDF…TGKA, and FFSS…ESED. Over residues 83 to 93 the composition is skewed to acidic residues; the sequence is FEDEDEYSDGE. Positions 96–103 match the Nuclear localization signal motif; the sequence is RKDSKKKK. Basic residues predominate over residues 99 to 113; sequence SKKKKGVAPNSKKRP. The residue at position 239 (serine 239) is a Phosphoserine. A compositionally biased stretch (basic and acidic residues) spans 242–258; sequence IKKEPMPEKTPAKKATE. The span at 260–278 shows a compositional bias: acidic residues; it reads PFSDNEMDFSCLDDDENQF. Residues serine 262 and serine 269 each carry the phosphoserine modification. Residues 286-303 show a composition bias toward polar residues; that stretch reads TEKVSQTKTAAEKTSQSK. Positions 304–325 are enriched in basic and acidic residues; that stretch reads VAEKSAPKKETTGSPKESESED. Threonine 314 carries the phosphothreonine modification. Residue serine 317 is modified to Phosphoserine. The interval 638 to 758 is contains conserved residues essential for 3' -&gt; 5' exonuclease activities; the sequence is DSERALLSWF…DLLEMYEKGE (121 aa). DNA-binding regions lie at residues 675 to 734 and 1255 to 1380; these read QIVA…CKQV and PTKF…RKKS. Residues cysteine 1296, cysteine 1299, cysteine 1324, cysteine 1329, cysteine 1362, cysteine 1367, cysteine 1385, and cysteine 1388 each contribute to the Zn(2+) site. The CysA-type zinc-finger motif lies at 1296-1327; that stretch reads CVTCKTEQLMASAYRPGPSNSHIAVLQQCAKS. The CysB motif signature appears at 1362 to 1388; sequence CDHPDCNFNTRTHSLRKKSHRPLCQKC.

The protein belongs to the DNA polymerase type-B family. In terms of assembly, component of the alpha DNA polymerase complex (also known as the alpha DNA polymerase-primase complex) consisting of four subunits: the catalytic subunit PolA1, the regulatory subunit PolA2, and the primase complex subunits Prim1 and Prim2 respectively. PolA1 associates with the DNA primase complex before association with PolA2. Interacts with Dpit47; the interaction inhibits the activity of the DNA polymerase and occurs only in proliferating cells but not in quiescent cells. In embryos, a cleaved form of 130 kDa is produced up to cycle 14 and then disappears. Expressed in embryos (at protein level).

The protein resides in the nucleus. It carries out the reaction DNA(n) + a 2'-deoxyribonucleoside 5'-triphosphate = DNA(n+1) + diphosphate. With respect to regulation, inhibited by N2-(p-n-butylphenyl) deoxyguanosine 5'-triphosphate and N2-(p-n-butylphenyl) deoxyadenosine 5'-triphosphate. DNA synthesis is not inhibited by fungal toxin alpha-amaitin. The 3'-5' exonuclease activity is inhibited by 10mM dGMP. Functionally, catalytic subunit of the DNA polymerase alpha complex (also known as the alpha DNA polymerase-primase complex) which plays an essential role in the initiation of DNA synthesis. During the S phase of the cell cycle, the DNA polymerase alpha complex (composed of a catalytic subunit PolA1, an accessory subunit PolA2 and two primase subunits, the catalytic subunit Prim1 and the regulatory subunit Prim2) is recruited to DNA at the replicative forks. The primase subunit of the polymerase alpha complex initiates DNA synthesis by oligomerising short RNA primers on both leading and lagging strands. These primers are initially extended by the polymerase alpha catalytic subunit and subsequently transferred to polymerase delta and polymerase epsilon for processive synthesis on the lagging and leading strand, respectively. In addition to polymerase activity, exhibits 3' to 5' exonuclease activity. The protein is DNA polymerase alpha catalytic subunit of Drosophila melanogaster (Fruit fly).